Here is a 556-residue protein sequence, read N- to C-terminus: MSTGLAGILFLASLVIALVAVHVPLGDYMYRVYNTAKDSRAENVVYRLIGADPKAEQTWGAYARSVLAFSAVSLLFLFILQLVQGRLPSALTDPGTPMTPALAWNTAVSFVTNTNWQAYSGESTHGHLVQMAGLAVQNFVSAAVGMAVAIALVRGFARKRTGELGNFWVDLVRGTIRILLPISVIAAILLITGGAIQNFHNYDQVVNTLAGAQQTIPGGPVASQEAIKDLGTNGGGFYNVNSAHPFENPTTWTNWIEIFLLLVIAFSLPRTFGRMVGNKKQGYAIVGVQAVLAVISWSATLFFQLQAHGTVPTAVGAAMEGVEQRFGVANSAVFAASTTLTSTGSVDSFHDSYTSLGGLVLLFNMQLGEVAPGGVGAGLYGILILAVITVFVAGLMVGRTPEYLGKKITPREIKLAATYFLVTPLIVLTGTAVAMAMPGQRAGMLNTGPHGLSEVLYAFTSAANNNGSAFAGITVNTEWYNTALGLAMVFGRFLPIILALALAGSLAQQGKTPPSIGTLPTHRPQFVGMVAGVTLILVALTFLPMLALGPLAEGIH.

Transmembrane regions (helical) follow at residues 5-25, 65-85, 133-153, 176-196, 249-269, 283-303, 377-397, 415-435, 483-503, and 526-546; these read LAGILFLASLVIALVAVHVPL, SVLAFSAVSLLFLFILQLVQG, GLAVQNFVSAAVGMAVAIALV, IRILLPISVIAAILLITGGAI, PTTWTNWIEIFLLLVIAFSLP, YAIVGVQAVLAVISWSATLFF, AGLYGILILAVITVFVAGLMV, LAATYFLVTPLIVLTGTAVAM, ALGLAMVFGRFLPIILALALA, and FVGMVAGVTLILVALTFLPML.

This sequence belongs to the KdpA family. As to quaternary structure, the system is composed of three essential subunits: KdpA, KdpB and KdpC.

It localises to the cell membrane. Part of the high-affinity ATP-driven potassium transport (or Kdp) system, which catalyzes the hydrolysis of ATP coupled with the electrogenic transport of potassium into the cytoplasm. This subunit binds the extracellular potassium ions and delivers the ions to the membrane domain of KdpB through an intramembrane tunnel. The polypeptide is Potassium-transporting ATPase potassium-binding subunit (Mycolicibacterium vanbaalenii (strain DSM 7251 / JCM 13017 / BCRC 16820 / KCTC 9966 / NRRL B-24157 / PYR-1) (Mycobacterium vanbaalenii)).